The following is a 536-amino-acid chain: Glycine-rich extracellular protein 1 (536 aa).

The first 22 residues, 1–22 (MGAWAFPAALFLLCLTSESLQG), serve as a signal peptide directing secretion. Disordered regions lie at residues 111 to 134 (AQNGFGPGFGGGGKPQKPGPTTQN), 306 to 336 (GAGEGMKPQKPGLRGTLKPQKSGHGHENGPW), and 500 to 536 (GDEYAEARSQPGGPDVKRGSNGQLGNGYGGRCPLGKC). The span at 115–124 (FGPGFGGGGK) shows a compositional bias: gly residues. Residues 521–536 (GQLGNGYGGRCPLGKC) are compositionally biased toward gly residues.

This is Glycine-rich extracellular protein 1 from Homo sapiens (Human).